We begin with the raw amino-acid sequence, 220 residues long: NADH-quinone oxidoreductase subunit B (220 aa).

4 residues coordinate [4Fe-4S] cluster: Cys37, Cys38, Cys103, and Cys132. The disordered stretch occupies residues 174 to 220 (PSSERYAPKNRSQRKLAERQQAAQRREMGAEKPLGALEERAELNAGR). A compositionally biased stretch (basic and acidic residues) spans 210 to 220 (LEERAELNAGR).

The protein belongs to the complex I 20 kDa subunit family. As to quaternary structure, NDH-1 is composed of 14 different subunits. Subunits NuoB, C, D, E, F, and G constitute the peripheral sector of the complex. [4Fe-4S] cluster is required as a cofactor.

It is found in the cell membrane. It carries out the reaction a quinone + NADH + 5 H(+)(in) = a quinol + NAD(+) + 4 H(+)(out). Functionally, NDH-1 shuttles electrons from NADH, via FMN and iron-sulfur (Fe-S) centers, to quinones in the respiratory chain. The immediate electron acceptor for the enzyme in this species is believed to be a menaquinone. Couples the redox reaction to proton translocation (for every two electrons transferred, four hydrogen ions are translocated across the cytoplasmic membrane), and thus conserves the redox energy in a proton gradient. This is NADH-quinone oxidoreductase subunit B from Saccharopolyspora erythraea (strain ATCC 11635 / DSM 40517 / JCM 4748 / NBRC 13426 / NCIMB 8594 / NRRL 2338).